A 984-amino-acid chain; its full sequence is Valine--tRNA ligase (984 aa).

The 'HIGH' region signature appears at 65-75; that stretch reads PNVTGSLHMGH. The 'KMSKS' region motif lies at 579-583; the sequence is KMSKS. Residue Lys-582 coordinates ATP. Residues 954–984 are a coiled coil; the sequence is VEVVDAEKAKLAELEGQLTAMTAQMEELKNL.

The protein belongs to the class-I aminoacyl-tRNA synthetase family. ValS type 1 subfamily. As to quaternary structure, monomer.

Its subcellular location is the cytoplasm. It carries out the reaction tRNA(Val) + L-valine + ATP = L-valyl-tRNA(Val) + AMP + diphosphate. Its function is as follows. Catalyzes the attachment of valine to tRNA(Val). As ValRS can inadvertently accommodate and process structurally similar amino acids such as threonine, to avoid such errors, it has a 'posttransfer' editing activity that hydrolyzes mischarged Thr-tRNA(Val) in a tRNA-dependent manner. This is Valine--tRNA ligase from Psychrobacter arcticus (strain DSM 17307 / VKM B-2377 / 273-4).